Reading from the N-terminus, the 185-residue chain is Putative manganese efflux pump MntP (185 aa).

Helical transmembrane passes span 4–24 (LTSSLIGIGLSMDCFAVALAI), 36–56 (ALVIAASFGIFQAGMTIAGWI), 65–85 (ISSYGSWIAFLLLAGIGIKMI), 105–125 (VILLSLATSIDAFAAGVSFGV), 130–150 (VLMPALAIGLVCFVVSCAGVF), and 165–185 (IFGGVILILIGIQILTDILPL).

This sequence belongs to the MntP (TC 9.B.29) family.

It is found in the cell membrane. Its function is as follows. Probably functions as a manganese efflux pump. The chain is Putative manganese efflux pump MntP from Methanoregula boonei (strain DSM 21154 / JCM 14090 / 6A8).